We begin with the raw amino-acid sequence, 408 residues long: Probable fructose-2,6-bisphosphatase C732.02c (408 aa).

16 to 24 (GLPASGKTS) contributes to the ATP binding site. The active site involves Asp-88. ATP is bound at residue 127-132 (NITDMC). Tyr-157 is a binding site for beta-D-fructose 6-phosphate. Arg-213 is a binding site for beta-D-fructose 2,6-bisphosphate. The active-site Tele-phosphohistidine intermediate is His-214. Beta-D-fructose 2,6-bisphosphate contacts are provided by Asn-220 and Gly-226. Glu-285 acts as the Proton donor/acceptor in catalysis. Positions 296, 310, 314, 325, 351, and 355 each coordinate beta-D-fructose 2,6-bisphosphate. Residue 307–310 (AELR) participates in ATP binding. ATP is bound by residues 351–355 (QAILR) and Tyr-387.

It in the C-terminal section; belongs to the phosphoglycerate mutase family.

The catalysed reaction is beta-D-fructose 2,6-bisphosphate + H2O = beta-D-fructose 6-phosphate + phosphate. This is predominantly if not solely a fructose-2,6-bisphosphatase. This chain is Probable fructose-2,6-bisphosphatase C732.02c, found in Schizosaccharomyces pombe (strain 972 / ATCC 24843) (Fission yeast).